The following is a 127-amino-acid chain: Large ribosomal subunit protein bL12 (127 aa).

The interval 94-114 (VDGAPSTLKEAASKEEAEEAK) is disordered. Basic and acidic residues predominate over residues 104–114 (AASKEEAEEAK).

Belongs to the bacterial ribosomal protein bL12 family. Homodimer. Part of the ribosomal stalk of the 50S ribosomal subunit. Forms a multimeric L10(L12)X complex, where L10 forms an elongated spine to which 2 to 4 L12 dimers bind in a sequential fashion. Binds GTP-bound translation factors.

Functionally, forms part of the ribosomal stalk which helps the ribosome interact with GTP-bound translation factors. Is thus essential for accurate translation. This is Large ribosomal subunit protein bL12 from Nitratidesulfovibrio vulgaris (strain ATCC 29579 / DSM 644 / CCUG 34227 / NCIMB 8303 / VKM B-1760 / Hildenborough) (Desulfovibrio vulgaris).